We begin with the raw amino-acid sequence, 93 residues long: Putative pterin-4-alpha-carbinolamine dehydratase (93 aa).

It belongs to the pterin-4-alpha-carbinolamine dehydratase family.

The catalysed reaction is (4aS,6R)-4a-hydroxy-L-erythro-5,6,7,8-tetrahydrobiopterin = (6R)-L-erythro-6,7-dihydrobiopterin + H2O. This chain is Putative pterin-4-alpha-carbinolamine dehydratase, found in Mycolicibacterium vanbaalenii (strain DSM 7251 / JCM 13017 / BCRC 16820 / KCTC 9966 / NRRL B-24157 / PYR-1) (Mycobacterium vanbaalenii).